The chain runs to 373 residues: Dual-specificity RNA methyltransferase RlmN (373 aa).

Glutamate 94 serves as the catalytic Proton acceptor. A Radical SAM core domain is found at 100–339 (EEDRATLCVS…VIVRKTRGDD (240 aa)). Cysteines 107 and 344 form a disulfide. Positions 114, 118, and 121 each coordinate [4Fe-4S] cluster. S-adenosyl-L-methionine is bound by residues 168–169 (GE), serine 200, 222–224 (SIH), and asparagine 301. Residue cysteine 344 is the S-methylcysteine intermediate of the active site.

This sequence belongs to the radical SAM superfamily. RlmN family. Requires [4Fe-4S] cluster as cofactor.

It is found in the cytoplasm. It catalyses the reaction adenosine(2503) in 23S rRNA + 2 reduced [2Fe-2S]-[ferredoxin] + 2 S-adenosyl-L-methionine = 2-methyladenosine(2503) in 23S rRNA + 5'-deoxyadenosine + L-methionine + 2 oxidized [2Fe-2S]-[ferredoxin] + S-adenosyl-L-homocysteine. The catalysed reaction is adenosine(37) in tRNA + 2 reduced [2Fe-2S]-[ferredoxin] + 2 S-adenosyl-L-methionine = 2-methyladenosine(37) in tRNA + 5'-deoxyadenosine + L-methionine + 2 oxidized [2Fe-2S]-[ferredoxin] + S-adenosyl-L-homocysteine. Functionally, specifically methylates position 2 of adenine 2503 in 23S rRNA and position 2 of adenine 37 in tRNAs. m2A2503 modification seems to play a crucial role in the proofreading step occurring at the peptidyl transferase center and thus would serve to optimize ribosomal fidelity. The sequence is that of Dual-specificity RNA methyltransferase RlmN from Shewanella frigidimarina (strain NCIMB 400).